The sequence spans 274 residues: N-acetylmuramic acid 6-phosphate etherase (274 aa).

The region spanning 52 to 215 (IVPRMEQGGR…STSIMIRLGR (164 aa)) is the SIS domain. Glutamate 80 acts as the Proton donor in catalysis. Glutamate 111 is a catalytic residue.

Belongs to the GCKR-like family. MurNAc-6-P etherase subfamily. Homodimer.

It catalyses the reaction N-acetyl-D-muramate 6-phosphate + H2O = N-acetyl-D-glucosamine 6-phosphate + (R)-lactate. Its pathway is amino-sugar metabolism; N-acetylmuramate degradation. Specifically catalyzes the cleavage of the D-lactyl ether substituent of MurNAc 6-phosphate, producing GlcNAc 6-phosphate and D-lactate. This Porphyromonas gingivalis (strain ATCC 33277 / DSM 20709 / CIP 103683 / JCM 12257 / NCTC 11834 / 2561) protein is N-acetylmuramic acid 6-phosphate etherase.